Here is a 134-residue protein sequence, read N- to C-terminus: D-ribose pyranase (134 aa).

The active-site Proton donor is the His-20. Substrate is bound by residues Asp-28, His-101, and 123 to 125 (YCN).

This sequence belongs to the RbsD / FucU family. RbsD subfamily. In terms of assembly, homodecamer.

The protein resides in the cytoplasm. The catalysed reaction is beta-D-ribopyranose = beta-D-ribofuranose. The protein operates within carbohydrate metabolism; D-ribose degradation; D-ribose 5-phosphate from beta-D-ribopyranose: step 1/2. Its function is as follows. Catalyzes the interconversion of beta-pyran and beta-furan forms of D-ribose. The chain is D-ribose pyranase from Pseudomonas fluorescens (strain SBW25).